The sequence spans 370 residues: Phosphate-binding protein PstS2 (370 aa).

The N-terminal stretch at 1–22 (MKFARSGAAVSLLAAGTLVLTA) is a signal peptide. The N-palmitoyl cysteine moiety is linked to residue C23. C23 carries the S-diacylglycerol cysteine lipid modification. Phosphate is bound by residues 54–56 (STA), S84, D102, and 191–193 (SGT).

The protein belongs to the PstS family. As to quaternary structure, the complex is composed of two ATP-binding proteins (PstB), two transmembrane proteins (PstC and PstA) and a solute-binding protein (PstS).

The protein resides in the cell membrane. It is found in the secreted. Functions in inorganic phosphate uptake, a phosphate-binding protein, although probably not the main uptake protein under phosphate starvation. Part of the ABC transporter complex PstSACB involved in phosphate import. The sequence is that of Phosphate-binding protein PstS2 (pstS2) from Mycobacterium bovis (strain BCG / Pasteur 1173P2).